Consider the following 557-residue polypeptide: Formate--tetrahydrofolate ligase (557 aa).

67-74 (TPAGEGKS) is an ATP binding site.

This sequence belongs to the formate--tetrahydrofolate ligase family.

The catalysed reaction is (6S)-5,6,7,8-tetrahydrofolate + formate + ATP = (6R)-10-formyltetrahydrofolate + ADP + phosphate. Its pathway is one-carbon metabolism; tetrahydrofolate interconversion. The sequence is that of Formate--tetrahydrofolate ligase from Lacticaseibacillus paracasei (strain ATCC 334 / BCRC 17002 / CCUG 31169 / CIP 107868 / KCTC 3260 / NRRL B-441) (Lactobacillus paracasei).